Reading from the N-terminus, the 101-residue chain is A-type ATP synthase subunit K (101 aa).

The next 3 helical transmembrane spans lie at 4-24 (ALLI…AAQA), 32-52 (FMGI…GAGV), and 75-95 (VLIF…FAVL).

This sequence belongs to the V-ATPase proteolipid subunit family. Has multiple subunits with at least A(3), B(3), C, D, E, F, H, I and proteolipid K(x).

It is found in the cell membrane. Its function is as follows. Component of the A-type ATP synthase that produces ATP from ADP in the presence of a proton gradient across the membrane. This is A-type ATP synthase subunit K from Sulfolobus acidocaldarius (strain ATCC 33909 / DSM 639 / JCM 8929 / NBRC 15157 / NCIMB 11770).